The chain runs to 589 residues: Cysteine/serine-rich nuclear protein 1 (589 aa).

Disordered regions lie at residues 1 to 62 (MTGL…RDFC) and 309 to 388 (FREL…GVDD). Low complexity-rich tracts occupy residues 17-41 (SSVS…SVSR) and 345-368 (DNSC…TSEA).

This sequence belongs to the AXUD1 family. As to expression, ubiquitous. Most abundantly expressed in lung, placenta, skeletal muscle, pancreas and leukocyte. Frequently down-regulated in lung, kidney, liver and colon cancers compared with their corresponding normal tissues.

The protein resides in the nucleus. Functionally, binds to the consensus sequence 5'-AGAGTG-3' and has transcriptional activator activity. May have a tumor-suppressor function. May play a role in apoptosis. In Homo sapiens (Human), this protein is Cysteine/serine-rich nuclear protein 1 (CSRNP1).